We begin with the raw amino-acid sequence, 517 residues long: RNA-binding region-containing protein 3 (517 aa).

Residues 1–26 (MAAPEQPLAISRGCTSSSSLSPPRGD) form a disordered region. A necessary for interaction with PDCD7 region spans residues 1-257 (MAAPEQPLAI…STDDEDRQRM (257 aa)). Phosphoserine is present on serine 21. The RRM 1 domain maps to 27–102 (RTLLVRHLPA…HTLVVEFAKE (76 aa)). Disordered stretches follow at residues 106–130 (VHSP…DDKE) and 213–254 (MPLH…DEDR). At serine 108 the chain carries Phosphoserine. The span at 115-130 (SEKKKRSDDPVEDDKE) shows a compositional bias: basic and acidic residues. The segment at 211-380 (DYMPLHAPLP…LDITEEIKED (170 aa)) is necessary for binding to m(7)G-capped U12 snRNA. Residues 217–230 (APLPPTSPQPPEEP) show a composition bias toward pro residues. The span at 231-252 (PLPDEDEELSSEESEYESTDDE) shows a compositional bias: acidic residues. The 84-residue stretch at 420–503 (CRIYVKNLAK…KPMVVQFARS (84 aa)) folds into the RRM 2 domain.

In terms of assembly, component of the U11/U12 snRNPs that are part of the U12-type spliceosome. Found in a complex with m(7)G-capped U12 snRNA. Interacts with PDCD7. In terms of tissue distribution, highly expressed in pancreas and kidney. Detected at lower levels in heart, brain, placenta, lung, liver, spleen, thymus, prostate, testis, ovary, small intestine, colon and leukocytes.

It localises to the nucleus. Participates in pre-mRNA U12-dependent splicing, performed by the minor spliceosome which removes U12-type introns. U12-type introns comprises less than 1% of all non-coding sequences. Binds to the 3'-stem-loop of m(7)G-capped U12 snRNA. This Homo sapiens (Human) protein is RNA-binding region-containing protein 3 (RNPC3).